The chain runs to 81 residues: ATP synthase subunit C, plastid (81 aa).

The next 2 membrane-spanning stretches (helical) occupy residues 3 to 23 and 61 to 81; these read PLIP…ASIG and EALT…NPFI.

This sequence belongs to the ATPase C chain family. F-type ATPases have 2 components, F(1) - the catalytic core - and F(0) - the membrane proton channel. F(1) has five subunits: alpha(3), beta(3), gamma(1), delta(1), epsilon(1). F(0) has four main subunits: a(1), b(1), b'(1) and c(10-14). The alpha and beta chains form an alternating ring which encloses part of the gamma chain. F(1) is attached to F(0) by a central stalk formed by the gamma and epsilon chains, while a peripheral stalk is formed by the delta, b and b' chains.

The protein resides in the plastid membrane. Its function is as follows. F(1)F(0) ATP synthase produces ATP from ADP in the presence of a proton or sodium gradient. F-type ATPases consist of two structural domains, F(1) containing the extramembraneous catalytic core and F(0) containing the membrane proton channel, linked together by a central stalk and a peripheral stalk. During catalysis, ATP synthesis in the catalytic domain of F(1) is coupled via a rotary mechanism of the central stalk subunits to proton translocation. Key component of the F(0) channel; it plays a direct role in translocation across the membrane. A homomeric c-ring of between 10-14 subunits forms the central stalk rotor element with the F(1) delta and epsilon subunits. This chain is ATP synthase subunit C, plastid, found in Aneura mirabilis (Parasitic liverwort).